An 88-amino-acid chain; its full sequence is Small ribosomal subunit protein bS20 (88 aa).

This sequence belongs to the bacterial ribosomal protein bS20 family.

Functionally, binds directly to 16S ribosomal RNA. The protein is Small ribosomal subunit protein bS20 of Micrococcus luteus (strain ATCC 4698 / DSM 20030 / JCM 1464 / CCM 169 / CCUG 5858 / IAM 1056 / NBRC 3333 / NCIMB 9278 / NCTC 2665 / VKM Ac-2230) (Micrococcus lysodeikticus).